We begin with the raw amino-acid sequence, 294 residues long: 4-hydroxy-tetrahydrodipicolinate synthase (294 aa).

Thr47 serves as a coordination point for pyruvate. The active-site Proton donor/acceptor is the Tyr135. Lys163 functions as the Schiff-base intermediate with substrate in the catalytic mechanism. Thr205 lines the pyruvate pocket.

It belongs to the DapA family. In terms of assembly, homotetramer; dimer of dimers.

It is found in the cytoplasm. The catalysed reaction is L-aspartate 4-semialdehyde + pyruvate = (2S,4S)-4-hydroxy-2,3,4,5-tetrahydrodipicolinate + H2O + H(+). Its pathway is amino-acid biosynthesis; L-lysine biosynthesis via DAP pathway; (S)-tetrahydrodipicolinate from L-aspartate: step 3/4. In terms of biological role, catalyzes the condensation of (S)-aspartate-beta-semialdehyde [(S)-ASA] and pyruvate to 4-hydroxy-tetrahydrodipicolinate (HTPA). This is 4-hydroxy-tetrahydrodipicolinate synthase from Rickettsia akari (strain Hartford).